The chain runs to 313 residues: Small glutamine-rich tetratricopeptide repeat-containing protein alpha (313 aa).

A disordered region spans residues 69–97 (KELPPDLRSPQETPPSEEDSAEAERLKTE). Ser77 is subject to Phosphoserine. Thr81 carries the phosphothreonine modification. Residue Ser84 is modified to Phosphoserine. TPR repeat units lie at residues 91–124 (AERL…NPAN), 125–158 (AVYF…DPSY), and 159–192 (SKAY…DPDN). Lys137 is subject to N6-acetyllysine. A Phosphoserine modification is found at Ser301. At Thr303 the chain carries Phosphothreonine. A Phosphoserine modification is found at Ser305.

Belongs to the SGT family. Homodimer. Homooligomer. Interacts with DNAJC5 and DNAJC5B. Interacts (via TPR repeats) with HSP90AA1. Interacts (via Gln-rich region) with SLC2A1. Interacts with HSP90AB1. Interacts (via TPR repeats) with HSPA8/Hsc70; the interaction is direct. Interacts with BAG6 (via ubiquitin-like domain); interaction prevents interaction between BAG6 and RNF126. Forms a multiprotein complex, at least composed of DNAJB12, DNAJB14, HSPA8/Hsc70 and SGTA; interaction with DNAJB14 and HSPA8/Hsc70 is direct.

Its subcellular location is the cytoplasm. The protein localises to the nucleus. In terms of biological role, co-chaperone that binds misfolded and hydrophobic patches-containing client proteins in the cytosol. Mediates their targeting to the endoplasmic reticulum but also regulates their sorting to the proteasome when targeting fails. Functions in tail-anchored/type II transmembrane proteins membrane insertion constituting with ASNA1 and the BAG6 complex a targeting module. Functions upstream of the BAG6 complex and ASNA1, binding more rapidly the transmembrane domain of newly synthesized proteins. It is also involved in the regulation of the endoplasmic reticulum-associated misfolded protein catabolic process via its interaction with BAG6: collaborates with the BAG6 complex to maintain hydrophobic substrates in non-ubiquitinated states. Competes with RNF126 for interaction with BAG6, preventing the ubiquitination of client proteins associated with the BAG6 complex. Binds directly to HSC70 and HSP70 and regulates their ATPase activity. This is Small glutamine-rich tetratricopeptide repeat-containing protein alpha (SGTA) from Bos taurus (Bovine).